The chain runs to 203 residues: Holliday junction branch migration complex subunit RuvA (203 aa).

Residues 1–65 form a domain I region; that stretch reads MIAYIHGKLL…EDAFDLYGFP (65 aa). A domain II region spans residues 66–144; it reads CFDDREVFRT…TLKSATVRSG (79 aa). Residues 145-155 are flexible linker; sequence ACPVEGDRSEF. A domain III region spans residues 155–203; that stretch reads FLDALSGLRNLGYGDDEVRDFLKDIFDEEPDLDAGGAIRVALKKISQNK.

It belongs to the RuvA family. As to quaternary structure, homotetramer. Forms an RuvA(8)-RuvB(12)-Holliday junction (HJ) complex. HJ DNA is sandwiched between 2 RuvA tetramers; dsDNA enters through RuvA and exits via RuvB. An RuvB hexamer assembles on each DNA strand where it exits the tetramer. Each RuvB hexamer is contacted by two RuvA subunits (via domain III) on 2 adjacent RuvB subunits; this complex drives branch migration. In the full resolvosome a probable DNA-RuvA(4)-RuvB(12)-RuvC(2) complex forms which resolves the HJ.

The protein localises to the cytoplasm. The RuvA-RuvB-RuvC complex processes Holliday junction (HJ) DNA during genetic recombination and DNA repair, while the RuvA-RuvB complex plays an important role in the rescue of blocked DNA replication forks via replication fork reversal (RFR). RuvA specifically binds to HJ cruciform DNA, conferring on it an open structure. The RuvB hexamer acts as an ATP-dependent pump, pulling dsDNA into and through the RuvAB complex. HJ branch migration allows RuvC to scan DNA until it finds its consensus sequence, where it cleaves and resolves the cruciform DNA. This is Holliday junction branch migration complex subunit RuvA from Maridesulfovibrio salexigens (strain ATCC 14822 / DSM 2638 / NCIMB 8403 / VKM B-1763) (Desulfovibrio salexigens).